A 500-amino-acid polypeptide reads, in one-letter code: Galactofuranose transporter ATP-binding protein YtfR (500 aa).

ABC transporter domains lie at 10–245 (LRTE…LGRE) and 259–497 (LSDK…IMNA). An ATP-binding site is contributed by 42 to 49 (GENGAGKS).

It belongs to the ABC transporter superfamily. As to quaternary structure, the complex is composed of two ATP-binding proteins (YtfR), two transmembrane proteins (YtfT and YjfF) and a solute-binding protein (YtfQ).

The protein localises to the cell inner membrane. It catalyses the reaction D-galactofuranose(out) + ATP + H2O = D-galactofuranose(in) + ADP + phosphate + H(+). Its function is as follows. Part of the ABC transporter complex YtfQRT-YjfF involved in galactofuranose transport. Responsible for energy coupling to the transport system. In Escherichia coli O157:H7, this protein is Galactofuranose transporter ATP-binding protein YtfR (ytfR).